Here is a 621-residue protein sequence, read N- to C-terminus: DNA mismatch repair protein MutL (621 aa).

This sequence belongs to the DNA mismatch repair MutL/HexB family.

Its function is as follows. This protein is involved in the repair of mismatches in DNA. It is required for dam-dependent methyl-directed DNA mismatch repair. May act as a 'molecular matchmaker', a protein that promotes the formation of a stable complex between two or more DNA-binding proteins in an ATP-dependent manner without itself being part of a final effector complex. This Xylella fastidiosa (strain M12) protein is DNA mismatch repair protein MutL.